Here is a 461-residue protein sequence, read N- to C-terminus: Protein naked cuticle homolog 2 (461 aa).

The segment at 1–106 (MGKFQSKHAA…DGEKAASREG (106 aa)) is disordered. Gly-2 is lipidated: N-myristoyl glycine. 2 stretches are compositionally biased toward basic and acidic residues: residues 34 to 73 (RGAE…DKGS) and 97 to 106 (DGEKAASREG). The segment at 121-186 (QCDVSVEEDN…LRVKLTVSPE (66 aa)) is interaction with DVL1, DVL2 and DVL3. The 36-residue stretch at 127 to 162 (EEDNRQEWTFTLYDFDNSGKVTREDMSSLMHTIYEV) folds into the EF-hand domain. 5 residues coordinate Ca(2+): Asp-140, Asp-142, Ser-144, Lys-146, and Asp-151. Disordered stretches follow at residues 176–205 (TLRV…PTRG), 263–302 (YTSK…HAIH), 321–359 (TRAL…PGKA), 372–414 (SAQD…GQPT), and 441–461 (HEHH…FHPS). Basic and acidic residues predominate over residues 188–205 (SSKKECPLTGQDREPTRG). The interval 307 to 396 (QVLAEHVIPA…PPQPYGHKRY (90 aa)) is interaction with TGFA. Positions 341–350 (PKGPGKPLGT) are enriched in low complexity. Positions 380-390 (PQPPPQPPPQP) are enriched in pro residues.

This sequence belongs to the NKD family. Interacts with RNF25, TGFA (via cytoplasmic domain), and PPP2R3A. Interacts with DVL1, DVL2 and DVL3. Post-translationally, ubiquitinated, leading to rapid proteasomal degradation. Interaction with TGFA interferes with RNF25 binding and protects against ubiquitination mediated by RNF25. As to expression, expressed in the cecum, colon, esophagus, ileum, jejunum, skin and stomach.

The protein resides in the cell membrane. It is found in the cytoplasm. The protein localises to the cytoplasmic vesicle. Functionally, cell autonomous antagonist of the canonical Wnt signaling pathway. May activate a second Wnt signaling pathway that controls planar cell polarity. Required for processing of TGFA and for targeting of TGFA to the basolateral membrane of polarized epithelial cells. This is Protein naked cuticle homolog 2 (Nkd2) from Mus musculus (Mouse).